The following is a 414-amino-acid chain: Argininosuccinate synthase (414 aa).

ATP contacts are provided by residues alanine 9–serine 17 and alanine 35. L-citrulline is bound by residues tyrosine 86 and serine 91. Serine 114–asparagine 122 provides a ligand contact to ATP. The L-aspartate site is built by threonine 118, asparagine 122, and aspartate 123. Asparagine 122 provides a ligand contact to L-citrulline. L-citrulline is bound by residues arginine 126, serine 179, serine 188, glutamate 269, and tyrosine 281.

It belongs to the argininosuccinate synthase family. In terms of assembly, homotetramer.

The protein localises to the cytoplasm. It localises to the cytosol. It catalyses the reaction L-citrulline + L-aspartate + ATP = 2-(N(omega)-L-arginino)succinate + AMP + diphosphate + H(+). It participates in amino-acid biosynthesis; L-arginine biosynthesis; L-arginine from L-ornithine and carbamoyl phosphate: step 2/3. The protein operates within nitrogen metabolism; urea cycle; (N(omega)-L-arginino)succinate from L-aspartate and L-citrulline: step 1/1. One of the enzymes of the urea cycle, the metabolic pathway transforming neurotoxic amonia produced by protein catabolism into inocuous urea in the liver of ureotelic animals. Catalyzes the formation of arginosuccinate from aspartate, citrulline and ATP and together with ASL it is responsible for the biosynthesis of arginine in most body tissues. The polypeptide is Argininosuccinate synthase (Danio rerio (Zebrafish)).